A 3579-amino-acid chain; its full sequence is Protocadherin-like wing polarity protein stan (3579 aa).

The first 29 residues, 1–29 (MQTREFPQRPLGLLLVLLVVLLQSSLIKS), serve as a signal peptide directing secretion. Over 30 to 2816 (YLIIVHEDTP…EPSLLVQITS (2787 aa)) the chain is Extracellular. N-linked (GlcNAc...) asparagine glycans are attached at residues Asn-46, Asn-179, and Asn-340. 8 consecutive Cadherin domains span residues 360–464 (EQAL…SPTF), 465–581 (EAEQ…YPQF), 582–689 (SERT…APRF), 690–794 (YTSQ…DPAF), 795–897 (NPKY…APIF), 898–1007 (ENAP…APAF), 1008–1113 (KSPL…PPTF), and 1114–1220 (ASDK…APVL). Residue Asn-671 is glycosylated (N-linked (GlcNAc...) asparagine). Asn-886 carries N-linked (GlcNAc...) asparagine glycosylation. Residues Asn-1269, Asn-1374, and Asn-1441 are each glycosylated (N-linked (GlcNAc...) asparagine). The EGF-like 1; calcium-binding domain maps to 1482-1518 (EVDLCYSDPCQNGGTCVRREGGYTCVCPSTHTGQNCE). 3 cysteine pairs are disulfide-bonded: Cys-1486–Cys-1497, Cys-1491–Cys-1506, and Cys-1508–Cys-1517. The Laminin G-like 1 domain maps to 1556-1753 (LRARAFGRNS…VADNGTLAGC (198 aa)). N-linked (GlcNAc...) asparagine glycosylation is found at Asn-1650, Asn-1678, and Asn-1747. Disulfide bonds link Cys-1727/Cys-1753, Cys-1760/Cys-1771, Cys-1765/Cys-1780, and Cys-1782/Cys-1791. Residues 1756–1792 (KAPLCQSEPCFNGGTCREGWGTYSCECPEGYAGNSCQ) enclose the EGF-like 2; calcium-binding domain. The Laminin G-like 2 domain maps to 1796 to 1963 (PAPWRFSGDG…TIRENVEDGC (168 aa)). N-linked (GlcNAc...) asparagine glycosylation occurs at Asn-1843. Disulfide bonds link Cys-1937–Cys-1963, Cys-1969–Cys-1979, Cys-1973–Cys-1988, and Cys-1990–Cys-1999. The 36-residue stretch at 1965–2000 (SRAQCPDHCPNHSSCQSSWDLSTCECDSGYVGTDCA) folds into the EGF-like 3; calcium-binding domain. The N-linked (GlcNAc...) asparagine glycan is linked to Asn-1975. Residues Asn-2016, Asn-2028, Asn-2071, and Asn-2088 are each glycosylated (N-linked (GlcNAc...) asparagine). 4 disulfides stabilise this stretch: Cys-2092/Cys-2095, Cys-2097/Cys-2114, Cys-2116/Cys-2125, and Cys-2128/Cys-2140. A Laminin EGF-like domain is found at 2095–2142 (CDCYSIGSFSGACNPLTGQCECREGVIGRRCDSCSNPYAEVTLSGCEV). N-linked (GlcNAc...) asparagine glycosylation is found at Asn-2196 and Asn-2320. The segment covering 2553 to 2562 (QETQRLEIPS) has biased composition (basic and acidic residues). Disordered stretches follow at residues 2553–2582 (QETQ…STEQ), 2610–2635 (HEIP…EREP), and 2654–2684 (VISP…GENE). Residues 2567–2579 (SSSSPSSSSSSGS) are compositionally biased toward low complexity. Positions 2653–2803 (EVISPDSPEM…AVIVDVIDPE (151 aa)) constitute a GAIN-B domain. 2 disulfides stabilise this stretch: Cys-2747-Cys-2785 and Cys-2762-Cys-2787. The GPS stretch occupies residues 2747 to 2803 (CVRWNSFTNQWTRLGCQTEIPDFDGDFNPAAQQAILVNCSCTHISSYAVIVDVIDPE). Residue Asn-2784 is glycosylated (N-linked (GlcNAc...) asparagine). The helical transmembrane segment at 2817 to 2837 (YSAFLVSLPLLLGVLLALALL) threads the bilayer. Over 2838–2845 (RGQQTNSN) the chain is Cytoplasmic. A helical membrane pass occupies residues 2846–2866 (TIHQNIVLCVFCAELLFFVGM). The Extracellular portion of the chain corresponds to 2867–2883 (QSRRQLLESEFPCKLTA). The chain crosses the membrane as a helical span at residues 2884–2904 (ICLHYFWLAAFAWTTVDCVHL). Residues 2905 to 2919 (YRMLTEMRDINHGPM) are Cytoplasmic-facing. The chain crosses the membrane as a helical span at residues 2920-2940 (GFYFAMGYGAPAIVVGLSVGV). Topologically, residues 2941 to 2959 (RAHEYGNSLFCWLSVYEPV) are extracellular. A helical transmembrane segment spans residues 2960–2980 (VWWLVGPIAGMSVVNLLILFV). Residues 2981–3000 (SVKAAFTLKDHVLGFGNLRT) lie on the Cytoplasmic side of the membrane. A helical transmembrane segment spans residues 3001–3021 (LLWLSVVSLPLMGVMWVLAVL). The Extracellular segment spans residues 3022 to 3031 (AASEHSQLLS). A helical membrane pass occupies residues 3032–3052 (LLLSGVVLLHALFCLIGYCII). Over 3053–3579 (NKRVRENLQR…RNIDDDETTV (527 aa)) the chain is Cytoplasmic. Disordered stretches follow at residues 3111-3225 (GISA…TPAY), 3343-3377 (LYGR…SGSQ), 3458-3486 (YHQQ…YHFP), and 3499-3579 (LSHT…ETTV). Residues 3113–3128 (SASSTTSRSTAKTSSS) show a composition bias toward low complexity. Basic and acidic residues predominate over residues 3167–3191 (RGGEEKPSRRQRKDSDSGSETDGRS). 2 positions are modified to phosphoserine: Ser-3199 and Ser-3200. A compositionally biased stretch (polar residues) spans 3208-3223 (ARSSGTHRSTAVSSTP). Residues 3343 to 3352 (LYGRRGEYPD) are compositionally biased toward basic and acidic residues. Residues 3459 to 3468 (HQQQQQQQQH) show a composition bias toward low complexity. Residues 3469 to 3482 (HLQDRLSEGSDKNG) show a composition bias toward basic and acidic residues. The segment covering 3501–3513 (HTQPPSLHGSQLM) has biased composition (polar residues).

The protein belongs to the G-protein coupled receptor 2 family. As to quaternary structure, interacts with ATP6AP2 (via N-terminus). In terms of tissue distribution, in the pupal wing, expressed at relatively even levels in all regions. Abundant in 6-9 hours embryos. Expressed at higher levels in pupae than larvae.

The protein localises to the cell membrane. Its subcellular location is the apical cell membrane. Involved in the fz signaling pathway that controls wing tissue polarity. Also mediates homophilic cell adhesion. May play a role in initiating prehair morphogenesis. May play a critical role in tissue polarity and in formation of normal dendrite fields. During planar cell polarity, stabilizes asymmetric PCP domains together with ATP6AP2. This is Protocadherin-like wing polarity protein stan (stan) from Drosophila melanogaster (Fruit fly).